An 86-amino-acid polypeptide reads, in one-letter code: Small ribosomal subunit protein bS18 (86 aa).

This sequence belongs to the bacterial ribosomal protein bS18 family. As to quaternary structure, part of the 30S ribosomal subunit. Forms a tight heterodimer with protein bS6.

Functionally, binds as a heterodimer with protein bS6 to the central domain of the 16S rRNA, where it helps stabilize the platform of the 30S subunit. This is Small ribosomal subunit protein bS18 from Herpetosiphon aurantiacus (strain ATCC 23779 / DSM 785 / 114-95).